The following is a 101-amino-acid chain: Small ribosomal subunit protein uS14 (101 aa).

The protein belongs to the universal ribosomal protein uS14 family. As to quaternary structure, part of the 30S ribosomal subunit. Contacts proteins S3 and S10.

Binds 16S rRNA, required for the assembly of 30S particles and may also be responsible for determining the conformation of the 16S rRNA at the A site. In Chlamydia trachomatis serovar L2 (strain ATCC VR-902B / DSM 19102 / 434/Bu), this protein is Small ribosomal subunit protein uS14.